The following is a 356-amino-acid chain: UDP-N-acetylenolpyruvoylglucosamine reductase (356 aa).

The FAD-binding PCMH-type domain occupies 19 to 227 (LGGPAARFCS…RDAVLSLRRS (209 aa)). The active site involves Arg167. Catalysis depends on Ser244, which acts as the Proton donor. Residue Glu348 is part of the active site.

This sequence belongs to the MurB family. It depends on FAD as a cofactor.

Its subcellular location is the cytoplasm. The catalysed reaction is UDP-N-acetyl-alpha-D-muramate + NADP(+) = UDP-N-acetyl-3-O-(1-carboxyvinyl)-alpha-D-glucosamine + NADPH + H(+). It participates in cell wall biogenesis; peptidoglycan biosynthesis. In terms of biological role, cell wall formation. In Thermobifida fusca (strain YX), this protein is UDP-N-acetylenolpyruvoylglucosamine reductase.